A 377-amino-acid chain; its full sequence is Guanine nucleotide-binding protein subunit alpha-13 (377 aa).

2 S-palmitoyl cysteine lipidation sites follow: Cys-14 and Cys-18. In terms of domain architecture, G-alpha spans 47-377 (RLVKILLLGA…HDNLKQLMLQ (331 aa)). The interval 50-63 (KILLLGAGESGKST) is G1 motif. Residues 58-63 (ESGKST), Ser-173, and 197-200 (LLAR) each bind GTP. Ser-62 contacts Mg(2+). The G2 motif stretch occupies residues 195 to 203 (DILLARRPT). Thr-203 provides a ligand contact to Mg(2+). Thr-203 is subject to Phosphothreonine; by PKA. Residues 218 to 227 (FKMVDVGGQR) are G3 motif. Positions 287 to 294 (ILFLNKTD) are G4 motif. Residues 291–294 (NKTD) and Ala-349 contribute to the GTP site. A G5 motif region spans residues 347 to 352 (TTAINT).

Belongs to the G-alpha family. G(12) subfamily. In terms of assembly, g proteins are composed of 3 units; alpha, beta and gamma. The alpha chain contains the guanine nucleotide binding site. Interacts with UBXD5. Interacts with HAX1. Interacts (in GTP-bound form) with PPP5C (via TPR repeats); activates PPP5C phosphatase activity and translocates PPP5C to the cell membrane. Interacts with RGS22. Interacts with ARHGEF1. Interacts (in GTP-bound form) with ARHGEF11 (via RGS domain). Interacts (in GTP-bound form) with ARHGEF12 (via RGS domain). Interacts (in GTP-bound form) with CTNND1. Interacts with GAS2L2. Interacts with GPR35. Interacts with GPR174. Palmitoylation is critical for proper membrane localization and signaling. Post-translationally, phosphorylation on Thr-203 by PKA destabilizes the heterotrimer of alpha, beta and gamma, and inhibits Rho activation.

The protein resides in the membrane. It is found in the melanosome. The protein localises to the cytoplasm. Its subcellular location is the nucleus. Its function is as follows. Guanine nucleotide-binding proteins (G proteins) are involved as modulators or transducers in various transmembrane signaling systems. Activates effector molecule RhoA by binding and activating RhoGEFs (ARHGEF1/p115RhoGEF, ARHGEF11/PDZ-RhoGEF and ARHGEF12/LARG). GNA13-dependent Rho signaling subsequently regulates transcription factor AP-1 (activating protein-1). Promotes tumor cell invasion and metastasis by activating RhoA/ROCK signaling pathway. Inhibits CDH1-mediated cell adhesion in process independent from Rho activation. In lymphoid follicles, transmits P2RY8- and S1PR2-dependent signals that lead to inhibition of germinal center (GC) B cell growth and migration outside the GC niche. This chain is Guanine nucleotide-binding protein subunit alpha-13 (Gna13), found in Rattus norvegicus (Rat).